Reading from the N-terminus, the 266-residue chain is Hydroxyethylthiazole kinase (266 aa).

Residue M44 coordinates substrate. The ATP site is built by K120 and T166. Position 193 (G193) interacts with substrate.

The protein belongs to the Thz kinase family. The cofactor is Mg(2+).

The enzyme catalyses 5-(2-hydroxyethyl)-4-methylthiazole + ATP = 4-methyl-5-(2-phosphooxyethyl)-thiazole + ADP + H(+). Its pathway is cofactor biosynthesis; thiamine diphosphate biosynthesis; 4-methyl-5-(2-phosphoethyl)-thiazole from 5-(2-hydroxyethyl)-4-methylthiazole: step 1/1. Catalyzes the phosphorylation of the hydroxyl group of 4-methyl-5-beta-hydroxyethylthiazole (THZ). The chain is Hydroxyethylthiazole kinase from Syntrophomonas wolfei subsp. wolfei (strain DSM 2245B / Goettingen).